The primary structure comprises 305 residues: PI protein (305 aa).

The protein belongs to the initiator RepB protein family. In terms of assembly, homodimer.

Functionally, initiation for plasmid R6K DNA replication. This is PI protein (pir) from Escherichia coli.